The chain runs to 232 residues: Histone H1A (232 aa).

Low complexity predominate over residues 1–18 (MSDPAVEVTPAVPVASPA). 2 disordered regions span residues 1–42 (MSDP…THLP) and 98–232 (LQTK…AKKA). One can recognise an H15 domain in the interval 39-113 (THLPVSDMVV…GASGSFKLPA (75 aa)). Basic residues-rich tracts occupy residues 131-141 (KPKKAAAPKPK), 147-173 (KVKK…KTTK), 181-214 (AAKK…KAKK), and 222-232 (KAAKKPAAKKA).

This sequence belongs to the histone H1/H5 family.

It localises to the nucleus. The protein localises to the chromosome. In terms of biological role, histones H1 are necessary for the condensation of nucleosome chains into higher-order structures. This chain is Histone H1A, found in Chironomus tentans (Midge).